The chain runs to 950 residues: Protein translocase subunit SecA (950 aa).

Residues Gln87, 105-109 (GEGKT), and Asp524 contribute to the ATP site. Positions 908-932 (GAAPVPAEARNPNDPSTWGKVGRNE) are disordered. Positions 934, 936, 945, and 946 each coordinate Zn(2+).

The protein belongs to the SecA family. Monomer and homodimer. Part of the essential Sec protein translocation apparatus which comprises SecA, SecYEG and auxiliary proteins SecDF-YajC and YidC. The cofactor is Zn(2+).

The protein resides in the cell inner membrane. The protein localises to the cytoplasm. It catalyses the reaction ATP + H2O + cellular proteinSide 1 = ADP + phosphate + cellular proteinSide 2.. Its function is as follows. Part of the Sec protein translocase complex. Interacts with the SecYEG preprotein conducting channel. Has a central role in coupling the hydrolysis of ATP to the transfer of proteins into and across the cell membrane, serving both as a receptor for the preprotein-SecB complex and as an ATP-driven molecular motor driving the stepwise translocation of polypeptide chains across the membrane. The chain is Protein translocase subunit SecA from Bradyrhizobium sp. (strain BTAi1 / ATCC BAA-1182).